A 750-amino-acid polypeptide reads, in one-letter code: Photosystem I P700 chlorophyll a apoprotein A1 (750 aa).

Helical transmembrane passes span 70 to 93 (VFSA…FHGA), 156 to 179 (LYCT…FHYH), 195 to 219 (LNHH…HVSL), 291 to 309 (IIHH…GHMY), 346 to 369 (WHAQ…HHMY), 385 to 411 (LSLF…IFMV), 433 to 455 (AIIS…LYIH), and 531 to 549 (FLVH…LILL). Residues Cys573 and Cys582 each contribute to the [4Fe-4S] cluster site. Helical transmembrane passes span 589–610 (HVFL…HFSW) and 664–686 (LSAY…MFLF). His675 is a binding site for chlorophyll a'. The chlorophyll a site is built by Met683 and Tyr691. Trp692 lines the phylloquinone pocket. A helical membrane pass occupies residues 724–744 (AVGVTHYLLGGIATTWAFFLA).

This sequence belongs to the PsaA/PsaB family. As to quaternary structure, the PsaA/B heterodimer binds the P700 chlorophyll special pair and subsequent electron acceptors. PSI consists of a core antenna complex that captures photons, and an electron transfer chain that converts photonic excitation into a charge separation. The eukaryotic PSI reaction center is composed of at least 11 subunits. It depends on P700 is a chlorophyll a/chlorophyll a' dimer, A0 is one or more chlorophyll a, A1 is one or both phylloquinones and FX is a shared 4Fe-4S iron-sulfur center. as a cofactor.

It is found in the plastid. The protein localises to the chloroplast thylakoid membrane. It carries out the reaction reduced [plastocyanin] + hnu + oxidized [2Fe-2S]-[ferredoxin] = oxidized [plastocyanin] + reduced [2Fe-2S]-[ferredoxin]. In terms of biological role, psaA and PsaB bind P700, the primary electron donor of photosystem I (PSI), as well as the electron acceptors A0, A1 and FX. PSI is a plastocyanin-ferredoxin oxidoreductase, converting photonic excitation into a charge separation, which transfers an electron from the donor P700 chlorophyll pair to the spectroscopically characterized acceptors A0, A1, FX, FA and FB in turn. Oxidized P700 is reduced on the lumenal side of the thylakoid membrane by plastocyanin. The sequence is that of Photosystem I P700 chlorophyll a apoprotein A1 from Phaseolus vulgaris (Kidney bean).